We begin with the raw amino-acid sequence, 484 residues long: Glycogen synthase 2 (484 aa).

Residue Arg15 participates in ADP-alpha-D-glucose binding.

Belongs to the glycosyltransferase 1 family. Bacterial/plant glycogen synthase subfamily.

The enzyme catalyses [(1-&gt;4)-alpha-D-glucosyl](n) + ADP-alpha-D-glucose = [(1-&gt;4)-alpha-D-glucosyl](n+1) + ADP + H(+). Its pathway is glycan biosynthesis; glycogen biosynthesis. Functionally, synthesizes alpha-1,4-glucan chains using ADP-glucose. The polypeptide is Glycogen synthase 2 (Geobacter sulfurreducens (strain ATCC 51573 / DSM 12127 / PCA)).